Here is a 174-residue protein sequence, read N- to C-terminus: Ribosome maturation factor RimM (174 aa).

In terms of domain architecture, PRC barrel spans 98–171 (EDEFYFHEII…KIKIHVMEGL (74 aa)).

Belongs to the RimM family. Binds ribosomal protein uS19.

The protein resides in the cytoplasm. Its function is as follows. An accessory protein needed during the final step in the assembly of 30S ribosomal subunit, possibly for assembly of the head region. Essential for efficient processing of 16S rRNA. May be needed both before and after RbfA during the maturation of 16S rRNA. It has affinity for free ribosomal 30S subunits but not for 70S ribosomes. This is Ribosome maturation factor RimM from Bacillus velezensis (strain DSM 23117 / BGSC 10A6 / LMG 26770 / FZB42) (Bacillus amyloliquefaciens subsp. plantarum).